The sequence spans 101 residues: Large ribosomal subunit protein eL43 (101 aa).

The C4-type zinc-finger motif lies at 40 to 62; sequence CPSCRSLVRLQRIAFGIWKCPKC.

This sequence belongs to the eukaryotic ribosomal protein eL43 family. Zn(2+) serves as cofactor.

The polypeptide is Large ribosomal subunit protein eL43 (Pyrobaculum neutrophilum (strain DSM 2338 / JCM 9278 / NBRC 100436 / V24Sta) (Thermoproteus neutrophilus)).